The sequence spans 197 residues: Protein shisa-4 (197 aa).

A signal peptide spans Met1–Ala27. Residues Gly28–Ala87 lie on the Extracellular side of the membrane. Residues Gly88–Leu108 traverse the membrane as a helical segment. The Cytoplasmic segment spans residues Cys109–Ala197.

This sequence belongs to the shisa family.

Its subcellular location is the membrane. This Homo sapiens (Human) protein is Protein shisa-4 (SHISA4).